Reading from the N-terminus, the 205-residue chain is 3-isopropylmalate dehydratase small subunit (205 aa).

Belongs to the LeuD family. LeuD type 1 subfamily. Heterodimer of LeuC and LeuD.

It catalyses the reaction (2R,3S)-3-isopropylmalate = (2S)-2-isopropylmalate. It functions in the pathway amino-acid biosynthesis; L-leucine biosynthesis; L-leucine from 3-methyl-2-oxobutanoate: step 2/4. Its function is as follows. Catalyzes the isomerization between 2-isopropylmalate and 3-isopropylmalate, via the formation of 2-isopropylmaleate. This chain is 3-isopropylmalate dehydratase small subunit, found in Christiangramia forsetii (strain DSM 17595 / CGMCC 1.15422 / KT0803) (Gramella forsetii).